The chain runs to 210 residues: Na(+)-translocating NADH-quinone reductase subunit D (210 aa).

The next 6 membrane-spanning stretches (helical) occupy residues 14–34 (PIVS…ALAV), 42–62 (LVMT…ISML), 72–92 (IIVQ…VLQA), 103–123 (VFVG…AYAM), 131–151 (FMDG…VGFV), and 178–198 (NGLL…IWII).

The protein belongs to the NqrDE/RnfAE family. As to quaternary structure, composed of six subunits; NqrA, NqrB, NqrC, NqrD, NqrE and NqrF.

The protein localises to the cell inner membrane. The catalysed reaction is a ubiquinone + n Na(+)(in) + NADH + H(+) = a ubiquinol + n Na(+)(out) + NAD(+). Functionally, NQR complex catalyzes the reduction of ubiquinone-1 to ubiquinol by two successive reactions, coupled with the transport of Na(+) ions from the cytoplasm to the periplasm. NqrA to NqrE are probably involved in the second step, the conversion of ubisemiquinone to ubiquinol. In Shewanella woodyi (strain ATCC 51908 / MS32), this protein is Na(+)-translocating NADH-quinone reductase subunit D.